The primary structure comprises 384 residues: Calreticulin-3 (384 aa).

The first 19 residues, M1–A19, serve as a signal peptide directing secretion. The segment at T20–E197 is N-domain. A glycan (N-linked (GlcNAc...) asparagine) is linked at N42. An intrachain disulfide couples C105 to C137. 4 residues coordinate an alpha-D-glucoside: Y109, K111, Y128, and D135. 7 repeat units span residues I191–L202, E209–Q220, A222–K231, D235–G246, G250–P260, D264–D272, and D274–S284. The tract at residues I191 to G246 is 4 X approximate repeats. The segment at Y198 to F294 is P-domain. The interval G250 to S284 is 3 X approximate repeats. The tract at residues E295–F384 is C-domain. E303 lines the an alpha-D-glucoside pocket. A Prevents secretion from ER motif is present at residues R381–F384.

Belongs to the calreticulin family. Component of an EIF2 complex at least composed of CELF1/CUGBP1, CALR, CALR3, EIF2S1, EIF2S2, HSP90B1 and HSPA5.

Its subcellular location is the endoplasmic reticulum lumen. Its function is as follows. During spermatogenesis, may act as a lectin-independent chaperone for specific client proteins such as ADAM3. CALR3 capacity for calcium-binding may be absent or much lower than that of CALR. Required for sperm fertility. The protein is Calreticulin-3 (CALR3) of Bos taurus (Bovine).